Consider the following 1012-residue polypeptide: MSNNMNIDQTDQNTIDEGLYSRQLYVLGHEAMKQMSQSNVLIIGCKGLGVEIAKNVCLAGVKSVTLYDPQPTRIEDLSSQYFLTEDDIGVPRAKVTVSKLAELNQYVPVSVVDELSTEYLKNFKCVVVTETSLTKQLEINDFTHKNHIAYIAADSRGLFGSIFCDFGENFICTDTDGNEPLTGMIASITDDGVVTMLEETRHGLENGDFVKFTEVKGMPGLNDGTPRKVEVKGPYTFSIGSVKDLGSAGYNGVFTQVKVPTKISFKSLRESLKDPEYVYPDFGKMMRPPQYHIAFQALSAFADAHEGSLPRPRNDIDAAEFFEFCKKIASTLQFDVELDEKLIKEISYQARGDLVAMSAFLGGAVAQEVLKATTSKFYPLKQYFYFDSLESLPSSVTISEETCKPRGCRYDGQIAVFGSEFQEKIASLSTFLVGAGAIGCEMLKNWAMMGVATGESGHISVTDMDSIEKSNLNRQFLFRPRDVGKLKSECASTAVSIMNPSLTGKITSYQERVGPESEGIFGDEFFEKLSLVTNALDNVEARMYVDRRCVFFEKPLLESGTLGTKGNTQVVVPHLTESYGSSQDPPEKSFPICTLKNFPNRIEHTIAWARDLFEGLFKQPIDNVNMYLSSPNFLETSLKTSSNPREVLENIRDYLVTEKPLSFEECIMWARLQFDKFFNNNIQQLLFNFPKDSVTSTGQPFWSGPKRAPTPLSFDIHNREHFDFIVAAASLYAFNYGLKSETDPAIYERVLAGYNPPPFAPKSGIKIQVNENEEAPETAANKDKQELKSIADSLPPPSSLVGFRLTPAEFEKDDDSNHHIDFITAASNLRAMNYDITPADRFKTKFVAGKIVPAMCTSTAVVSGLVCLELVKLVDGKKKIEEYKNGFFNLAIGLFTFSDPIASPKMKVNGKEIDKIWDRYNLPDCTLQELIDYFQKEEGLEVTMLSSGVSLLYANFQPPKKLAERLPLKISELVEQITKKKLEPFRKHLVLEICCDDANGEDVEVPFICIKL.

Position 22 (R22) interacts with ATP. S264 is modified (phosphoserine). ATP-binding residues include A437 and D463. Positions 465 and 468 each coordinate Mg(2+). Positions 471, 474, 487, 513, 537, and 538 each coordinate ATP. D537 contacts Mg(2+). K588 is covalently cross-linked (Glycyl lysine isopeptide (Lys-Gly) (interchain with G-Cter in ubiquitin)). The Glycyl thioester intermediate role is filled by C593. A Phosphoserine modification is found at S903.

The protein belongs to the ubiquitin-activating E1 family. Monomer. Interacts with the E2 ubiquitin-conjugating enzyme ubc4.

Its subcellular location is the cytoplasm. The protein localises to the nucleus. The catalysed reaction is ATP + ubiquitin + [E1 ubiquitin-activating enzyme]-L-cysteine = AMP + diphosphate + S-ubiquitinyl-[E1 ubiquitin-activating enzyme]-L-cysteine.. The protein operates within protein modification; protein ubiquitination. Ubiquitin transfer between the E1 ubiquitin-activating enzyme ptr3 and E2 ubiquitin-conjugating enzyme ubc4 is enhanced by the presence of magnesium and ATP, or adenylated ubiquitin. E1 ubiquitin-activating enzyme that catalyzes the first step in ubiquitin conjugation to mark cellular proteins for degradation through the ubiquitin-proteasome system. Activates ubiquitin by first adenylating its C-terminal glycine residue with ATP, and thereafter linking this residue to the side chain of a cysteine residue in E1, yielding a ubiquitin-E1 thioester and free AMP. The sequence is that of Ubiquitin-activating enzyme E1 1 (ptr3) from Schizosaccharomyces pombe (strain 972 / ATCC 24843) (Fission yeast).